We begin with the raw amino-acid sequence, 75 residues long: Translational regulator CsrA (75 aa).

This sequence belongs to the CsrA/RsmA family. Homodimer; the beta-strands of each monomer intercalate to form a hydrophobic core, while the alpha-helices form wings that extend away from the core.

It localises to the cytoplasm. A translational regulator that binds mRNA to regulate translation initiation and/or mRNA stability. Usually binds in the 5'-UTR at or near the Shine-Dalgarno sequence preventing ribosome-binding, thus repressing translation. Its main target seems to be the major flagellin gene, while its function is anatagonized by FliW. The protein is Translational regulator CsrA of Treponema denticola (strain ATCC 35405 / DSM 14222 / CIP 103919 / JCM 8153 / KCTC 15104).